The chain runs to 238 residues: Heme oxygenase 1 (238 aa).

The protein belongs to the heme oxygenase family.

The catalysed reaction is heme b + 3 reduced [NADPH--hemoprotein reductase] + 3 O2 = biliverdin IXalpha + CO + Fe(2+) + 3 oxidized [NADPH--hemoprotein reductase] + 3 H2O + H(+). Its function is as follows. Catalyzes the opening of the heme ring with the release of iron. Key enzyme in the synthesis of the chromophoric part of the photosynthetic antennae. Upon overexpression in E.coli with PCB:ferredoxin oxidoreductase, CpeS and either CpcB or PecB permits synthesis of phycocyanin-coupled CpcB or PecB. This Nostoc sp. (strain PCC 7120 / SAG 25.82 / UTEX 2576) protein is Heme oxygenase 1 (pbsA1).